Reading from the N-terminus, the 105-residue chain is UPF0145 protein CCNA_02462 (105 aa).

This sequence belongs to the UPF0145 family.

The sequence is that of UPF0145 protein CCNA_02462 from Caulobacter vibrioides (strain NA1000 / CB15N) (Caulobacter crescentus).